Here is a 354-residue protein sequence, read N- to C-terminus: NADH-quinone oxidoreductase subunit H (354 aa).

The next 8 helical transmembrane spans lie at 23–43 (LVRAVCIILPLLLCVAYLILW), 91–111 (YIIAPLMVLMPAVAIWAVIPF), 124–144 (LLYVMAISSVGVYGVILAGWA), 162–182 (ISYEIAMGFALVTVLMVTGSL), 203–223 (ILSWNWLPLLPMFGVYFISGV), 250–270 (GMAFALFFLAEYINMIVISAL), 291–311 (IPGFFWLLIKVFLLLSVFIWL), and 330–350 (IFIPLTVGWLVVVAIWLVSPW).

It belongs to the complex I subunit 1 family. NDH-1 is composed of 14 different subunits. Subunits NuoA, H, J, K, L, M, N constitute the membrane sector of the complex.

The protein localises to the cell inner membrane. The enzyme catalyses a quinone + NADH + 5 H(+)(in) = a quinol + NAD(+) + 4 H(+)(out). Its function is as follows. NDH-1 shuttles electrons from NADH, via FMN and iron-sulfur (Fe-S) centers, to quinones in the respiratory chain. The immediate electron acceptor for the enzyme in this species is believed to be ubiquinone. Couples the redox reaction to proton translocation (for every two electrons transferred, four hydrogen ions are translocated across the cytoplasmic membrane), and thus conserves the redox energy in a proton gradient. This subunit may bind ubiquinone. The protein is NADH-quinone oxidoreductase subunit H of Ralstonia pickettii (strain 12J).